A 104-amino-acid polypeptide reads, in one-letter code: Complex III assembly factor LYRM7 (104 aa).

Ser60 bears the Phosphoserine mark.

The protein belongs to the complex I LYR family. As to quaternary structure, interacts with UQCRFS1.

It localises to the mitochondrion matrix. In terms of biological role, assembly factor required for Rieske Fe-S protein UQCRFS1 incorporation into the cytochrome b-c1 (CIII) complex. Functions as a chaperone, binding to this subunit within the mitochondrial matrix and stabilizing it prior to its translocation and insertion into the late CIII dimeric intermediate within the mitochondrial inner membrane. This Rattus norvegicus (Rat) protein is Complex III assembly factor LYRM7 (Lyrm7).